Here is a 168-residue protein sequence, read N- to C-terminus: NADH dehydrogenase [ubiquinone] 1 alpha subcomplex assembly factor 2 (168 aa).

Positions 108–118 are enriched in basic and acidic residues; it reads KEKLLQEESNK. The tract at residues 108 to 168 is disordered; that stretch reads KEKLLQEESN…MPHGDKGHSQ (61 aa). Residue S133 is modified to Phosphoserine. Over residues 144-155 the composition is skewed to polar residues; it reads ESPTSTGKTFQP.

It belongs to the complex I NDUFA12 subunit family. In terms of assembly, interacts with ARMC9.

The protein resides in the mitochondrion. Functionally, acts as a molecular chaperone for mitochondrial complex I assembly. Complex I functions in the transfer of electrons from NADH to the respiratory chain. The immediate electron acceptor for the enzyme is believed to be ubiquinone. Is involved in the initial steps of cilia formation, including removal of CP110 from the mother centrioles, docking of membrane vesicles to the mother centrioles, and establishment of the transition zone. The protein is NADH dehydrogenase [ubiquinone] 1 alpha subcomplex assembly factor 2 (NDUFAF2) of Bos taurus (Bovine).